We begin with the raw amino-acid sequence, 342 residues long: WW domain binding protein 1-like (342 aa).

Residues 42-62 form a helical membrane-spanning segment; the sequence is LWWFWLVWTIIIILSCCCVCH. Disordered stretches follow at residues 133 to 247 and 292 to 320; these read LPPQ…RRFT and PGDE…RPPA. The segment covering 158-173 has biased composition (low complexity); sequence SSPLSEPSRSSTRPPS. S173 bears the Phosphoserine mark. The segment covering 212 to 240 has biased composition (basic and acidic residues); that stretch reads LDKDAECREELLKDDSSEHGAPDSKEKTP.

The protein resides in the membrane. The polypeptide is WW domain binding protein 1-like (WBP1L) (Homo sapiens (Human)).